Reading from the N-terminus, the 274-residue chain is MTAPNIEMIASSLRNCSLNGGGGGGGGRRRGRRAAAAEGSDDSEGVTVELNSEVALPYHWEQCLDIRTGQVYYINWEDGTRTTIDPRSSSAYSPSPASRSASSSSRRCSRARGRGGGGGAAAAASTTTSSGYTSVSSVGAVTAAAAAWRSHDSSGHGYGYGYGYGSYGYGYGYDGRDGDDEESSSSSSSSSSSSSSASSSRGSAVSSTLSSFSPTDESASGAGSGYAVGDNGAHVLVAAGCRACFMYFMVPKTADVCPKCGSSGLLHLSRNGYV.

The segment at 17–44 (SLNGGGGGGGGRRRGRRAAAAEGSDDSE) is disordered. Positions 47–52 (TVELNS) match the EAR motif. A WW domain is found at 54 to 88 (VALPYHWEQCLDIRTGQVYYINWEDGTRTTIDPRS). Disordered regions lie at residues 83-133 (TIDP…SGYT) and 175-216 (GRDG…SPTD). Composition is skewed to low complexity over residues 87-106 (RSSS…SSSR), 121-133 (AAAA…SGYT), and 184-207 (SSSS…AVSS).

In terms of assembly, binds to HDG1.

In terms of biological role, negatively regulates the cuticle development probably by interacting with the HD-ZIP IV transcription factor HDG1. In Oryza sativa subsp. japonica (Rice), this protein is Protein CURLY FLAG LEAF 1.